A 565-amino-acid chain; its full sequence is Periplasmic trehalase (565 aa).

Positions Met-1 to Ala-30 are cleaved as a signal peptide. Residues Arg-152, Trp-159–Asp-160, Asn-196, Arg-205–Gln-207, Arg-277–Glu-279, and Gly-310 each bind substrate. Residues Asp-312 and Glu-496 each act as proton donor/acceptor in the active site. Glu-511 serves as a coordination point for substrate. Residues Cys-539 to Pro-565 are disordered.

This sequence belongs to the glycosyl hydrolase 37 family. Monomer.

It is found in the periplasm. It catalyses the reaction alpha,alpha-trehalose + H2O = alpha-D-glucose + beta-D-glucose. Functionally, provides the cells with the ability to utilize trehalose at high osmolarity by splitting it into glucose molecules that can subsequently be taken up by the phosphotransferase-mediated uptake system. The polypeptide is Periplasmic trehalase (Escherichia coli O17:K52:H18 (strain UMN026 / ExPEC)).